Consider the following 184-residue polypeptide: Mitochondrial import inner membrane translocase subunit Tim22 (184 aa).

2 cysteine pairs are disulfide-bonded: Cys-59-Cys-131 and Cys-150-Cys-169. 3 helical membrane-spanning segments follow: residues 64 to 84, 115 to 133, and 160 to 180; these read ALAC…TAGI, YAKN…ECLV, and AGLK…AVID.

It belongs to the Tim17/Tim22/Tim23 family. Core component of the TIM22 complex.

It is found in the mitochondrion inner membrane. In terms of biological role, essential core component of the TIM22 complex, a complex that mediates the import and insertion of multi-pass transmembrane proteins into the mitochondrial inner membrane. In the TIM22 complex, it constitutes the voltage-activated and signal-gated channel. Forms a twin-pore translocase that uses the membrane potential as external driving force in 2 voltage-dependent steps. In Xenopus laevis (African clawed frog), this protein is Mitochondrial import inner membrane translocase subunit Tim22 (timm22).